A 523-amino-acid polypeptide reads, in one-letter code: GMP synthase [glutamine-hydrolyzing] (523 aa).

Positions 9–198 (PVLVVDYGAQ…LTEIAGLEQN (190 aa)) constitute a Glutamine amidotransferase type-1 domain. The active-site Nucleophile is the cysteine 86. Residues histidine 172 and glutamate 174 contribute to the active site. A GMPS ATP-PPase domain is found at 199-397 (WTAANIAEEL…LGLPEVIVAR (199 aa)). 227 to 233 (SGGVDSA) lines the ATP pocket.

As to quaternary structure, homodimer.

The catalysed reaction is XMP + L-glutamine + ATP + H2O = GMP + L-glutamate + AMP + diphosphate + 2 H(+). The protein operates within purine metabolism; GMP biosynthesis; GMP from XMP (L-Gln route): step 1/1. In terms of biological role, catalyzes the synthesis of GMP from XMP. This chain is GMP synthase [glutamine-hydrolyzing], found in Corynebacterium efficiens (strain DSM 44549 / YS-314 / AJ 12310 / JCM 11189 / NBRC 100395).